A 910-amino-acid chain; its full sequence is DNA mismatch repair protein MutS (910 aa).

Basic and acidic residues predominate over residues 1 to 11 (MEAKVEEKEPE). Residues 1 to 21 (MEAKVEEKEPEPVENAGPDAP) are disordered. 658–665 (GPNMGGKS) is an ATP binding site.

It belongs to the DNA mismatch repair MutS family.

This protein is involved in the repair of mismatches in DNA. It is possible that it carries out the mismatch recognition step. This protein has a weak ATPase activity. The protein is DNA mismatch repair protein MutS of Brucella abortus (strain 2308).